Here is a 290-residue protein sequence, read N- to C-terminus: 33 kDa chaperonin (290 aa).

2 disulfides stabilise this stretch: Cys-235–Cys-237 and Cys-268–Cys-271.

It belongs to the HSP33 family. In terms of processing, under oxidizing conditions two disulfide bonds are formed involving the reactive cysteines. Under reducing conditions zinc is bound to the reactive cysteines and the protein is inactive.

Its subcellular location is the cytoplasm. Its function is as follows. Redox regulated molecular chaperone. Protects both thermally unfolding and oxidatively damaged proteins from irreversible aggregation. Plays an important role in the bacterial defense system toward oxidative stress. The chain is 33 kDa chaperonin from Streptococcus pyogenes serotype M3 (strain ATCC BAA-595 / MGAS315).